Reading from the N-terminus, the 75-residue chain is RNA-binding protein KhpA (75 aa).

Residues 29-75 (SIIIELKVAPEDMGKVIGKQGRIAQAIRTLVKAAALKEKKRVIVEII) enclose the KH domain.

This sequence belongs to the KhpA RNA-binding protein family. In terms of assembly, forms a complex with KhpB.

The protein localises to the cytoplasm. A probable RNA chaperone. Forms a complex with KhpB which binds to cellular RNA and controls its expression. Plays a role in peptidoglycan (PG) homeostasis and cell length regulation. This Caldanaerobacter subterraneus subsp. tengcongensis (strain DSM 15242 / JCM 11007 / NBRC 100824 / MB4) (Thermoanaerobacter tengcongensis) protein is RNA-binding protein KhpA.